We begin with the raw amino-acid sequence, 432 residues long: Serine/threonine-protein kinase CDG1 (432 aa).

S-palmitoyl cysteine attachment occurs at residues cysteine 4 and cysteine 6. The span at 15–24 (LKDKSHKRSI) shows a compositional bias: basic residues. The segment at 15–47 (LKDKSHKRSIRNQTSSSSAQPAGTAKEVDSSSS) is disordered. A compositionally biased stretch (polar residues) spans 25-35 (RNQTSSSSAQP). Serine 44 and serine 47 each carry phosphoserine. The 281-residue stretch at 74 to 354 (FRNESLIGRG…SQVVECLKYI (281 aa)) folds into the Protein kinase domain. ATP-binding positions include 80 to 88 (IGRGGFGTV) and lysine 102. Position 147 is a phosphotyrosine (tyrosine 147). The Proton acceptor role is filled by aspartate 200. Serine 204 and serine 234 each carry phosphoserine. Residues threonine 235 and threonine 240 each carry the phosphothreonine modification. A Phosphotyrosine modification is found at tyrosine 248.

Belongs to the protein kinase superfamily. Ser/Thr protein kinase family. As to quaternary structure, interacts with BSU1, BSL1 and BRI1. Post-translationally, phosphorylated at Ser-44, Ser-47 and Ser-234 by BRI1. Expressed at high levels in the stamen and pollen grains. Expressed at a very low level in vegetative tissues.

The protein resides in the cell membrane. The enzyme catalyses L-seryl-[protein] + ATP = O-phospho-L-seryl-[protein] + ADP + H(+). The catalysed reaction is L-threonyl-[protein] + ATP = O-phospho-L-threonyl-[protein] + ADP + H(+). Its activity is regulated as follows. Activated by phosphorylation at Ser-234. Functionally, serine/threonine-protein kinase involved in the positive regulation of brassinosteroid (BR) signaling and plant growth. Mediates BR signal transduction from BRI1 receptor kinase to BSU1 phosphatase. After activation by phosphorylation at Ser-234 by BRI1, CDG1 phosphorylates BSU1 at 'Ser-764' in the phosphatase domain, increasing the ability of BSU1 to inactivate the negative regulator of BR signaling ASK7/BIN2 by dephosphorylation at 'Tyr-200'. The full kinase activity of CDG1 is required for its biological function. This chain is Serine/threonine-protein kinase CDG1, found in Arabidopsis thaliana (Mouse-ear cress).